The primary structure comprises 238 residues: Ribonuclease PH (238 aa).

Phosphate-binding positions include R86 and 124-126; that span reads GTR.

The protein belongs to the RNase PH family. In terms of assembly, homohexameric ring arranged as a trimer of dimers.

It catalyses the reaction tRNA(n+1) + phosphate = tRNA(n) + a ribonucleoside 5'-diphosphate. In terms of biological role, phosphorolytic 3'-5' exoribonuclease that plays an important role in tRNA 3'-end maturation. Removes nucleotide residues following the 3'-CCA terminus of tRNAs; can also add nucleotides to the ends of RNA molecules by using nucleoside diphosphates as substrates, but this may not be physiologically important. Probably plays a role in initiation of 16S rRNA degradation (leading to ribosome degradation) during starvation. The protein is Ribonuclease PH of Mesorhizobium japonicum (strain LMG 29417 / CECT 9101 / MAFF 303099) (Mesorhizobium loti (strain MAFF 303099)).